A 187-amino-acid chain; its full sequence is Elongation factor P (187 aa).

This sequence belongs to the elongation factor P family.

The protein localises to the cytoplasm. It participates in protein biosynthesis; polypeptide chain elongation. Its function is as follows. Involved in peptide bond synthesis. Stimulates efficient translation and peptide-bond synthesis on native or reconstituted 70S ribosomes in vitro. Probably functions indirectly by altering the affinity of the ribosome for aminoacyl-tRNA, thus increasing their reactivity as acceptors for peptidyl transferase. The sequence is that of Elongation factor P from Mycolicibacterium vanbaalenii (strain DSM 7251 / JCM 13017 / BCRC 16820 / KCTC 9966 / NRRL B-24157 / PYR-1) (Mycobacterium vanbaalenii).